A 230-amino-acid chain; its full sequence is Ribonuclease 3 (230 aa).

In terms of domain architecture, RNase III spans 1–134 (MKQLEELLST…FLGALLLDKG (134 aa)). Position 47 (glutamate 47) interacts with Mg(2+). Residue aspartate 51 is part of the active site. Residues aspartate 120 and glutamate 123 each coordinate Mg(2+). Glutamate 123 is a catalytic residue. One can recognise a DRBM domain in the interval 160-229 (DYKTCLQEFL…AKNALAQLSE (70 aa)).

Belongs to the ribonuclease III family. In terms of assembly, homodimer. Mg(2+) is required as a cofactor.

It is found in the cytoplasm. The enzyme catalyses Endonucleolytic cleavage to 5'-phosphomonoester.. Functionally, digests double-stranded RNA. Involved in the processing of primary rRNA transcript to yield the immediate precursors to the large and small rRNAs (23S and 16S). Processes some mRNAs, and tRNAs when they are encoded in the rRNA operon. Processes pre-crRNA and tracrRNA of type II CRISPR loci if present in the organism. The protein is Ribonuclease 3 of Streptococcus pyogenes serotype M3 (strain SSI-1).